The primary structure comprises 55 residues: Antiviral protein GAP-31 (55 aa).

The disordered stretch occupies residues 29–55; the sequence is KPEGNSHGIPSLRKSSDDPGSSFVVAG.

The protein belongs to the ribosome-inactivating protein family. Type 1 RIP subfamily.

The enzyme catalyses Endohydrolysis of the N-glycosidic bond at one specific adenosine on the 28S rRNA.. Functionally, single-chain ribosome-inactivating protein, possessing high antiviral potency and low toxicity to normal cells in culture and to intact animals. Capable of inhibiting HIV-1 infection and replication. The sequence is that of Antiviral protein GAP-31 from Suregada multiflora (False lime).